A 105-amino-acid polypeptide reads, in one-letter code: Probable tetrachloroethene reductive dehalogenase membrane anchor protein (105 aa).

3 consecutive transmembrane segments (helical) span residues 3-23 (IYDV…QYGI), 35-55 (IPLQ…LAWG), and 66-86 (AIGM…IITY).

The protein belongs to the PceB family.

The protein resides in the cell membrane. May act as a membrane anchor for the tetrachloroethene reductive dehalogenase PceA. The protein is Probable tetrachloroethene reductive dehalogenase membrane anchor protein of Desulfitobacterium hafniense (Desulfitobacterium frappieri).